Here is a 313-residue protein sequence, read N- to C-terminus: HPr kinase/phosphorylase (313 aa).

Active-site residues include His-140 and Lys-161. 155–162 (GNSGAGKS) lines the ATP pocket. A Mg(2+)-binding site is contributed by Ser-162. Asp-179 serves as the catalytic Proton acceptor; for phosphorylation activity. Proton donor; for dephosphorylation activity. An important for the catalytic mechanism of both phosphorylation and dephosphorylation region spans residues 203-212 (IEVRGLGILN). Glu-204 contacts Mg(2+). The active site involves Arg-246. Residues 267–272 (PVAAGR) are important for the catalytic mechanism of dephosphorylation.

Belongs to the HPrK/P family. Homohexamer. The cofactor is Mg(2+).

The enzyme catalyses [HPr protein]-L-serine + ATP = [HPr protein]-O-phospho-L-serine + ADP + H(+). It catalyses the reaction [HPr protein]-O-phospho-L-serine + phosphate + H(+) = [HPr protein]-L-serine + diphosphate. Its function is as follows. Catalyzes the ATP- as well as the pyrophosphate-dependent phosphorylation of a specific serine residue in HPr, a phosphocarrier protein of the phosphoenolpyruvate-dependent sugar phosphotransferase system (PTS). HprK/P also catalyzes the pyrophosphate-producing, inorganic phosphate-dependent dephosphorylation (phosphorolysis) of seryl-phosphorylated HPr (P-Ser-HPr). In Azoarcus sp. (strain BH72), this protein is HPr kinase/phosphorylase.